Consider the following 168-residue polypeptide: MLVYQDKLSGDELLSDSFPYRELENGVLWEVDGHWVVQGAVDVDIGANPSAEGGGEDEGVDDQAVKVVDIVDTFRLQEQPAFDKKQFIAYIKRYIKNLTAKLEGEELDAFKKNVESATKYLLSKLKDLQFFVGESMHDDGSVVFAYYREGAADPTFLYFAHGLKEVKC.

Positions 1 to 168 constitute a TCTP domain; sequence MLVYQDKLSG…FAHGLKEVKC (168 aa).

It belongs to the TCTP family.

The protein localises to the cytoplasm. Involved in calcium binding and microtubule stabilization. In Hordeum vulgare (Barley), this protein is Translationally-controlled tumor protein homolog (TCTP).